We begin with the raw amino-acid sequence, 437 residues long: Interactor protein for cytohesin exchange factors 1 (437 aa).

One can recognise a PH domain in the interval 41-140 (HADCQGWLYK…WLNKLGSAVI (100 aa)). Disordered regions lie at residues 143 to 225 (ESTT…PDTV) and 273 to 307 (LSSD…ETKV). The segment covering 151-162 (CYSESEQEDPEI) has biased composition (acidic residues). A compositionally biased stretch (low complexity) spans 172–200 (ASQTQSLTAQQASSSSPSLSGTSYSFSSL). The span at 201-214 (ENTVKTPSSFPSSL) shows a compositional bias: polar residues. A compositionally biased stretch (low complexity) spans 273 to 283 (LSSDDTSSLSS). CRAC domain stretches follow at residues 315-320 (KLYKSL) and 339-348 (LRKSFVKRCK). Positions 389 to 437 (KYREWKVMNTLLIQDIYQQQRASPAPDDTDDTPQELKKSPSSPSVENSI) are required for interaction with CYTH2. Residues 406–437 (QQQRASPAPDDTDDTPQELKKSPSSPSVENSI) form a disordered region. S411 bears the Phosphoserine mark. Residues 427–437 (SPSSPSVENSI) show a composition bias toward polar residues.

Interacts with guanine-nucleotide exchange factors PSCD1, PSCD2, PSCD3 and PSCD4. Interacts (via C-terminus) with cytohesin-2 CYTH2.

The protein localises to the cytoplasm. Its subcellular location is the cell membrane. Its function is as follows. Enhances the promotion of guanine-nucleotide exchange by PSCD2 on ARF6 in a concentration-dependent manner. In Homo sapiens (Human), this protein is Interactor protein for cytohesin exchange factors 1 (IPCEF1).